The primary structure comprises 329 residues: Dapdiamide synthesis protein DdaC (329 aa).

Requires Fe(2+) as cofactor.

It functions in the pathway antibiotic biosynthesis. Functionally, involved in dapdiamide antibiotics biosynthesis. Catalyzes the alpha-ketoglutarate-dependent epoxidation of the covalently bound N-beta-fumaramoyl-DAP-S-DdaD to generate N-beta-epoxysuccinamoyl-DAP in thioester linkage to DdaD. The protein is Dapdiamide synthesis protein DdaC of Enterobacter agglomerans (Erwinia herbicola).